A 112-amino-acid polypeptide reads, in one-letter code: Large ribosomal subunit protein eL30 (112 aa).

Belongs to the eukaryotic ribosomal protein eL30 family.

The polypeptide is Large ribosomal subunit protein eL30 (rpl30) (Dictyostelium discoideum (Social amoeba)).